Here is a 328-residue protein sequence, read N- to C-terminus: Cytosolic Fe-S cluster assembly factor NBP35 (328 aa).

Residues cysteine 27, cysteine 41, cysteine 44, and cysteine 50 each coordinate [4Fe-4S] cluster. 80 to 87 (GKGGVGKS) provides a ligand contact to ATP. Positions 253 and 256 each coordinate [4Fe-4S] cluster.

It belongs to the Mrp/NBP35 ATP-binding proteins family. NUBP1/NBP35 subfamily. Heterotetramer of 2 NBP35 and 2 CFD1 chains. The cofactor is [4Fe-4S] cluster.

The protein resides in the cytoplasm. It is found in the nucleus. Component of the cytosolic iron-sulfur (Fe/S) protein assembly (CIA) machinery. Required for maturation of extramitochondrial Fe-S proteins. The NBP35-CFD1 heterotetramer forms a Fe-S scaffold complex, mediating the de novo assembly of an Fe-S cluster and its transfer to target apoproteins. Required for biogenesis and export of both ribosomal subunits, which may reflect a role in assembly of the Fe/S clusters in RLI1, a protein which performs rRNA processing and ribosome export. In Saccharomyces cerevisiae (strain ATCC 204508 / S288c) (Baker's yeast), this protein is Cytosolic Fe-S cluster assembly factor NBP35.